We begin with the raw amino-acid sequence, 269 residues long: Flagellar brake protein YcgR (269 aa).

The interval 1–42 is disordered; it reads MLREPMNQHDAPGPAETGADSDAETDAETDAETDAGAADDRY. A compositionally biased stretch (acidic residues) spans 19 to 33; it reads ADSDAETDAETDAET. One can recognise a PilZ domain in the interval 149–261; it reads QRRRHFRART…MENFLQRLVF (113 aa).

This sequence belongs to the YcgR family. Monomer. Interacts with the flagellar basal bodies.

The protein resides in the bacterial flagellum basal body. Acts as a flagellar brake, regulating swimming and swarming in a bis-(3'-5') cyclic diguanylic acid (c-di-GMP)-dependent manner. Binds 1 c-di-GMP dimer per subunit. Increasing levels of c-di-GMP lead to decreased motility. In Cupriavidus taiwanensis (strain DSM 17343 / BCRC 17206 / CCUG 44338 / CIP 107171 / LMG 19424 / R1) (Ralstonia taiwanensis (strain LMG 19424)), this protein is Flagellar brake protein YcgR.